Reading from the N-terminus, the 560-residue chain is 2-hydroxyacyl-CoA lyase (560 aa).

Glu49 contacts thiamine diphosphate. Residues Asp446 and Asn473 each coordinate Mg(2+). Positions 558 to 560 match the Peroxisomal target signal 1 (PTS1) motif; the sequence is PRL.

It belongs to the TPP enzyme family. Mg(2+) serves as cofactor. It depends on thiamine diphosphate as a cofactor.

It is found in the cytoplasm. It localises to the peroxisome matrix. The enzyme catalyses an (R)-2-hydroxy-long-chain-fatty acyl-CoA = a long-chain fatty aldehyde + formyl-CoA. It carries out the reaction a 2-hydroxy-3-methyl fatty acyl-CoA = a 2-methyl-branched fatty aldehyde + formyl-CoA. In terms of biological role, catalyzes a carbon-carbon cleavage reaction; cleaves a 2-hydroxy-3-methylacyl-CoA into formyl-CoA and a 2-methyl-branched fatty aldehyde. This Saccharomyces cerevisiae (strain ATCC 204508 / S288c) (Baker's yeast) protein is 2-hydroxyacyl-CoA lyase.